The primary structure comprises 45 residues: Large ribosomal subunit protein bL34 (45 aa).

Residues 1-45 (MTKRTFGGTSRKRKRVSGFRVRMRSHTGRRVIKSRRQKGRERIAV) are disordered. The span at 10-39 (SRKRKRVSGFRVRMRSHTGRRVIKSRRQKG) shows a compositional bias: basic residues.

It belongs to the bacterial ribosomal protein bL34 family.

This Prochlorococcus marinus (strain MIT 9301) protein is Large ribosomal subunit protein bL34.